The chain runs to 348 residues: ELAV-like protein 3 (348 aa).

RRM domains follow at residues 34 to 112 (TNLI…YARP), 120 to 200 (ANLY…FANN), and 265 to 343 (WCIF…FKTS).

It belongs to the RRM elav family. In terms of tissue distribution, expression is neural-specific in both embryos and adults. Expressed from neurula stage onwards in primary motor-, inter- and sensory-neurons. Expressed in the closing neural tube and motor neurons of stage 18 embryos, and primarily in the ventricular zone and dorsal region of the tailbud and adult brain. Expressed from stage 26 onwards in the differentiating ganglion cell layer of the retina, extending to the inner nuclear layer at later stages.

RNA-binding protein that binds to AU-rich element (ARE) sequences of target mRNAs. May also bind poly-A tracts via RRM 3. May be involved in neuronal differentiation and maintenance. The polypeptide is ELAV-like protein 3 (elavl3) (Xenopus laevis (African clawed frog)).